The chain runs to 81 residues: Photosystem I iron-sulfur center (81 aa).

4Fe-4S ferredoxin-type domains lie at 2–31 and 39–68; these read SHSV…MVPW and IASS…IRVY. Residues Cys11, Cys14, Cys17, Cys21, Cys48, Cys51, Cys54, and Cys58 each contribute to the [4Fe-4S] cluster site.

The G.violaceus PSI reaction center is composed of one copy each of PsaA,B,C,D,E,F,L,M and Z, and forms trimeric complexes. Requires [4Fe-4S] cluster as cofactor.

It is found in the cell inner membrane. The catalysed reaction is reduced [plastocyanin] + hnu + oxidized [2Fe-2S]-[ferredoxin] = oxidized [plastocyanin] + reduced [2Fe-2S]-[ferredoxin]. Functionally, apoprotein for the two 4Fe-4S centers FA and FB of photosystem I (PSI); essential for photochemical activity. FB is the terminal electron acceptor of PSI, donating electrons to ferredoxin. The C-terminus interacts with PsaA/B/D and helps assemble the protein into the PSI complex. Required for binding of PsaD and PsaE to PSI. PSI is a plastocyanin/cytochrome c6-ferredoxin oxidoreductase, converting photonic excitation into a charge separation, which transfers an electron from the donor P700 chlorophyll pair to the spectroscopically characterized acceptors A0, A1, FX, FA and FB in turn. This chain is Photosystem I iron-sulfur center, found in Gloeobacter violaceus (strain ATCC 29082 / PCC 7421).